Consider the following 796-residue polypeptide: Serine/threonine-protein kinase ATG1 (796 aa).

Positions 9-304 constitute a Protein kinase domain; it reads YVVGAEIGRG…FQEFFNDPVI (296 aa). ATP is bound by residues 15–23 and lysine 38; that span reads IGRGSFANV. Aspartate 155 functions as the Proton acceptor in the catalytic mechanism. The span at 360–370 shows a compositional bias: acidic residues; that stretch reads LEEEDEEEDQD. 3 disordered regions span residues 360–382, 389–408, and 450–480; these read LEEE…IQHM, LLNK…RREL, and PYTR…KVPI. Residues 389–403 are compositionally biased toward polar residues; that stretch reads LLNKTTQKQTEVQSQ. Over residues 453–470 the composition is skewed to low complexity; it reads RRYSSSSRSSSTGSNQRR.

It belongs to the protein kinase superfamily. Ser/Thr protein kinase family. APG1/unc-51/ULK1 subfamily. As to quaternary structure, homodimer. Forms a ternary complex with ATG13 and ATG17.

It localises to the cytoplasm. Its subcellular location is the preautophagosomal structure membrane. It carries out the reaction L-seryl-[protein] + ATP = O-phospho-L-seryl-[protein] + ADP + H(+). The catalysed reaction is L-threonyl-[protein] + ATP = O-phospho-L-threonyl-[protein] + ADP + H(+). Functionally, serine/threonine protein kinase involved in the cytoplasm to vacuole transport (Cvt) and found to be essential in autophagy, where it is required for the formation of autophagosomes. Involved in the clearance of protein aggregates which cannot be efficiently cleared by the proteasome. Required for selective autophagic degradation of the nucleus (nucleophagy) as well as for mitophagy which contributes to regulate mitochondrial quantity and quality by eliminating the mitochondria to a basal level to fulfill cellular energy requirements and preventing excess ROS production. Also involved in endoplasmic reticulum-specific autophagic process, in selective removal of ER-associated degradation (ERAD) substrates. Plays a key role in ATG9 and ATG23 cycling through the pre-autophagosomal structure and is necessary to promote ATG18 binding to ATG9 through phosphorylation of ATG9. Catalyzes phosphorylation of ATG4, decreasing the interaction between ATG4 and ATG8 and impairing deconjugation of PE-conjugated forms of ATG8. This Komagataella pastoris (Yeast) protein is Serine/threonine-protein kinase ATG1.